Reading from the N-terminus, the 110-residue chain is uncharacterized protein (110 aa).

Helical transmembrane passes span 21-41 and 63-83; these read IQLA…PQIC and PSMI…IIVV.

It localises to the membrane. This is an uncharacterized protein from Saccharomyces cerevisiae (strain ATCC 204508 / S288c) (Baker's yeast).